We begin with the raw amino-acid sequence, 79 residues long: MSEFWHKLGCCVVEKPQPKKRRRRIDRTMIGEPMNFVHLTHIGSGEMGAGDGLAMTGAVQEQMRSKGNRDRPWSNSRGL.

Residues Cys-10 and Cys-11 are each lipidated (S-palmitoyl cysteine). In terms of domain architecture, CRIB spans 30 to 43 (IGEPMNFVHLTHIG). The disordered stretch occupies residues 48–79 (GAGDGLAMTGAVQEQMRSKGNRDRPWSNSRGL). Positions 63–72 (MRSKGNRDRP) are enriched in basic and acidic residues.

The protein belongs to the CDC42SE/SPEC family. As to quaternary structure, interacts with CDC42 (in GTP-bound form). Interacts weakly with RAC1 and not at all with RHOA.

The protein localises to the cytoplasm. It is found in the cytoskeleton. It localises to the cell membrane. Its function is as follows. Probably involved in the organization of the actin cytoskeleton by acting downstream of CDC42, inducing actin filament assembly. Alters CDC42-induced cell shape changes. In activated T-cells, may play a role in CDC42-mediated F-actin accumulation at the immunological synapse. May play a role in early contractile events in phagocytosis in macrophages. This is CDC42 small effector protein 1 (CDC42SE1) from Pongo abelii (Sumatran orangutan).